Reading from the N-terminus, the 122-residue chain is Large ribosomal subunit protein uL14 (122 aa).

It belongs to the universal ribosomal protein uL14 family. Part of the 50S ribosomal subunit. Forms a cluster with proteins L3 and L19. In the 70S ribosome, L14 and L19 interact and together make contacts with the 16S rRNA in bridges B5 and B8.

Its function is as follows. Binds to 23S rRNA. Forms part of two intersubunit bridges in the 70S ribosome. This Geobacillus sp. (strain WCH70) protein is Large ribosomal subunit protein uL14.